The primary structure comprises 126 residues: Glycine cleavage system H protein (126 aa).

The Lipoyl-binding domain maps to 23 to 105 (AATVGITDHA…YGEGWLLRVR (83 aa)). K64 carries the N6-lipoyllysine modification.

The protein belongs to the GcvH family. The glycine cleavage system is composed of four proteins: P, T, L and H. Requires (R)-lipoate as cofactor.

Its function is as follows. The glycine cleavage system catalyzes the degradation of glycine. The H protein shuttles the methylamine group of glycine from the P protein to the T protein. In Rubrobacter xylanophilus (strain DSM 9941 / JCM 11954 / NBRC 16129 / PRD-1), this protein is Glycine cleavage system H protein.